We begin with the raw amino-acid sequence, 474 residues long: Sulfide dehydrogenase subunit alpha (474 aa).

The propeptide occupies methionine 1–proline 2. Residues cysteine 42, cysteine 45, cysteine 52, and cysteine 56 each contribute to the [4Fe-4S] cluster site. Positions 101, 107, and 111 each coordinate [3Fe-4S] cluster.

In terms of assembly, heterodimer of alpha and beta subunits. FAD serves as cofactor. [3Fe-4S] cluster is required as a cofactor. It depends on [4Fe-4S] cluster as a cofactor.

The protein localises to the cytoplasm. The catalysed reaction is n sulfur + hydrogen sulfide + NADP(+) = (n+1) sulfur + NADPH. It carries out the reaction 2 reduced [2Fe-2S]-[ferredoxin] + NADP(+) + H(+) = 2 oxidized [2Fe-2S]-[ferredoxin] + NADPH. Functionally, a bifunctional enzyme that catalyzes the reduction of elemental sulfur or polysulfide to hydrogen sulfide with NADPH as electron donor. Also functions as a reduced ferredoxin:NADP oxidoreductase with a very high affinity for reduced ferredoxin. Exhibits a broad specificity for various physiological and non-physiological substrates with varied reduction potentials such as methyl viologen, benzyl viologen, FAD, FMN, methylene blue, 2,6-dichlorophenolindophenol (DCIP), cytochrome C and ferricyanide with highest preference for benzyl viologen. Does not reduce fumarate, succinate, nitrate, nitrite, sulfate, sulfite or protons. Does not possess any hydrogenase activity or NADPH-dependent glutamate synthase activity. This is Sulfide dehydrogenase subunit alpha from Pyrococcus furiosus (strain ATCC 43587 / DSM 3638 / JCM 8422 / Vc1).